Consider the following 85-residue polypeptide: Protein Vpu (85 aa).

Topologically, residues 1–7 (MHHRDLL) are extracellular. A helical membrane pass occupies residues 8-28 (AIIIISALLFINVILWGFILR). Residues 29–85 (KYLEQKEQDRKEREILERLRRIREIRDDSDYESNGEEEQEVMDLVLSHGFDNPMFEP) lie on the Cytoplasmic side of the membrane.

This sequence belongs to the HIV-1 VPU protein family. In terms of assembly, homopentamer. Interacts with host CD4 and BRTC; these interactions induce proteasomal degradation of CD4. Interacts with host BST2; this interaction leads to the degradation of host BST2. Interacts with host FBXW11. Interacts with host AP1M1; this interaction plays a role in the mistrafficking and subsequent degradation of host BST2. Interacts with host RANBP2; this interaction allows Vpu to down-regulate host BLM sumoylation. In terms of processing, phosphorylated by host CK2. This phosphorylation is necessary for interaction with human BTRC and degradation of CD4.

The protein resides in the host membrane. Ion channel activity is inhibited by hexamethylene amiloride in vitro. Enhances virion budding by targeting host CD4 and Tetherin/BST2 to proteasome degradation. Degradation of CD4 prevents any unwanted premature interactions between viral Env and its host receptor CD4 in the endoplasmic reticulum. Degradation of antiretroviral protein Tetherin/BST2 is important for virion budding, as BST2 tethers new viral particles to the host cell membrane. Mechanistically, Vpu bridges either CD4 or BST2 to BTRC, a substrate recognition subunit of the Skp1/Cullin/F-box protein E3 ubiquitin ligase, induces their ubiquitination and subsequent proteasomal degradation. The alteration of the E3 ligase specificity by Vpu seems to promote the degradation of host IKBKB, leading to NF-kappa-B down-regulation and subsequent apoptosis. Acts as a viroporin that forms an oligomeric ion channel in membranes. Modulates the host DNA repair mechanisms to promote degradation of nuclear viral cDNA in cells that are already productively infected in order to suppress immune sensing and proviral hyper-integration (superinfection). Manipulates PML-NBs and modulates SUMOylation of host BLM protein thereby enhancing its DNA-end processing activity toward viral unintegrated linear DNA. Also inhibits RAD52-mediated homologous repair of viral cDNA, preventing the generation of dead-end circular forms of single copies of the long terminal repeat and permitting sustained nucleolytic attack. The chain is Protein Vpu from Human immunodeficiency virus type 1 group O (isolate ANT70) (HIV-1).